The sequence spans 393 residues: Protein TsgA (393 aa).

At 1 to 10 (MTNSNRIKLT) the chain is on the cytoplasmic side. A helical transmembrane segment spans residues 11–31 (WISFLSYALTGALVIVTGMVM). The Periplasmic segment spans residues 32–50 (GNIADYFHLPVSSMSNTFT). A helical membrane pass occupies residues 51 to 71 (FLNAGILISIFLNAWLMEIVP). Topologically, residues 72-77 (LKTQLR) are cytoplasmic. A helical transmembrane segment spans residues 78–98 (FGFILMVLAVAGLMFSHSLAL). Topologically, residues 99-100 (FS) are periplasmic. Residues 101-121 (AAMFVLGLVSGITMSIGTFLI) form a helical membrane-spanning segment. Residues 122 to 133 (TQLYEGRQRGSR) lie on the Cytoplasmic side of the membrane. Residues 134-154 (LLFTDSFFSMAGMIFPMVAAF) traverse the membrane as a helical segment. Residues 155–161 (LLARSIE) lie on the Periplasmic side of the membrane. Residues 162 to 182 (WYWVYACIGLVYLAIFILTFG) form a helical membrane-spanning segment. Topologically, residues 183-205 (CEFPALGKHAQHSQAPVVKEKWG) are cytoplasmic. The chain crosses the membrane as a helical span at residues 206 to 226 (IGVLFLAVAALCYILGQLGFI). Residues 227–244 (SWVPEYAKGLGMSLNDAG) are Periplasmic-facing. Residues 245-265 (ALVSDFWMSYMFGMWAFSFIL) traverse the membrane as a helical segment. The Cytoplasmic segment spans residues 266–272 (RFFDLQR). Residues 273-293 (ILTVLAGMAAVLMYLFITGTQ) form a helical membrane-spanning segment. The Periplasmic segment spans residues 294–297 (AHMP). A helical transmembrane segment spans residues 298–318 (WFILTLGFFSSAIYTSIITLG). At 319–331 (SQQTKVASPKLVN) the chain is on the cytoplasmic side. The chain crosses the membrane as a helical span at residues 332-352 (FILTCGTIGTMLTFVVTGPIV). Over 353–360 (AHSGPQAA) the chain is Periplasmic. Residues 361-381 (LLTANGLYAVVFVMCFALGFV) traverse the membrane as a helical segment. Over 382–393 (SRHRQHSSPAAH) the chain is Cytoplasmic.

The protein belongs to the major facilitator superfamily. TsgA family.

It is found in the cell inner membrane. The protein is Protein TsgA of Salmonella paratyphi A (strain ATCC 9150 / SARB42).